The sequence spans 446 residues: ATP synthase subunit b-delta (446 aa).

Residues 1 to 168 are ATP synthase subunit b; the sequence is MSTFIGQLFG…PATADVDYPL (168 aa). The helical transmembrane segment at 4–24 threads the bilayer; sequence FIGQLFGFAVIVYLVWRFIVP. Residues 169–446 form an ATP synthase subunit delta region; sequence LAKMRSASRR…LAAAEARLPD (278 aa).

The protein in the N-terminal section; belongs to the ATPase B chain family. In the C-terminal section; belongs to the ATPase delta chain family. As to quaternary structure, F-type ATPases have 2 components, F(1) - the catalytic core - and F(0) - the membrane proton channel. F(1) has five subunits: alpha(3), beta(3), gamma(1), delta(1), epsilon(1). F(0) has three main subunits: a(1), b(2) and c(10-14). The alpha and beta chains form an alternating ring which encloses part of the gamma chain. F(1) is attached to F(0) by a central stalk formed by the gamma and epsilon chains, while a peripheral stalk is formed by the delta and b chains.

Its subcellular location is the cell membrane. Its function is as follows. F(1)F(0) ATP synthase produces ATP from ADP in the presence of a proton or sodium gradient. F-type ATPases consist of two structural domains, F(1) containing the extramembraneous catalytic core and F(0) containing the membrane proton channel, linked together by a central stalk and a peripheral stalk. During catalysis, ATP synthesis in the catalytic domain of F(1) is coupled via a rotary mechanism of the central stalk subunits to proton translocation. Functionally, this fusion protein includes a component of the F(0) channel (subunit b) and of the F(1) subunit (subunit delta). Two copies of subunit b and one of delta together form the peripheral 'stator' stalk which links F(1) to F(0). The sequence is that of ATP synthase subunit b-delta (atpFH) from Mycobacterium bovis (strain ATCC BAA-935 / AF2122/97).